The sequence spans 396 residues: Probable mannan endo-1,4-beta-mannosidase A-2 (396 aa).

The first 21 residues, 1-21 (MKVPRLLLALGGLASIHIASA), serve as a signal peptide directing secretion. Substrate is bound at residue Trp-99. An N-linked (GlcNAc...) asparagine glycan is attached at Asn-120. Substrate is bound at residue Asn-212. The Proton donor role is filled by Glu-213. A glycan (N-linked (GlcNAc...) asparagine) is linked at Asn-270. Position 288 (Tyr-288) interacts with substrate. Catalysis depends on Glu-321, which acts as the Nucleophile. Position 351 (Trp-351) interacts with substrate.

It belongs to the glycosyl hydrolase 5 (cellulase A) family.

It localises to the secreted. The enzyme catalyses Random hydrolysis of (1-&gt;4)-beta-D-mannosidic linkages in mannans, galactomannans and glucomannans.. Its function is as follows. Endo-1,4-mannanase, a crucial enzyme for depolymerization of seed galactomannans and wood galactoglucomannans. The polypeptide is Probable mannan endo-1,4-beta-mannosidase A-2 (manA-2) (Aspergillus terreus (strain NIH 2624 / FGSC A1156)).